We begin with the raw amino-acid sequence, 113 residues long: MNTVRVTFLLVFVLAVSLGQADKDENRMEMQEKTEQGKSYLDFAENLLLQKLEELVAKLLEEDSEESRNSRQKRCIGEGVPCDENDPRCCSGLVCLKPTLHGIWYKSYYCYKK.

The signal sequence occupies residues 1–21 (MNTVRVTFLLVFVLAVSLGQA). Residues 22–74 (DKDENRMEMQEKTEQGKSYLDFAENLLLQKLEELVAKLLEEDSEESRNSRQKR) constitute a propeptide that is removed on maturation. Cystine bridges form between Cys-75-Cys-90, Cys-82-Cys-95, and Cys-89-Cys-110.

The protein belongs to the neurotoxin 14 (magi-1) family. 01 (HNTX-16) subfamily. In terms of tissue distribution, expressed by the venom gland.

It localises to the secreted. Probable ion channel inhibitor. In Cyriopagopus hainanus (Chinese bird spider), this protein is U11-theraphotoxin-Hhn1a.